A 330-amino-acid chain; its full sequence is Trans-1,2-dihydrobenzene-1,2-diol dehydrogenase (330 aa).

The protein belongs to the Gfo/Idh/MocA family. In terms of assembly, homodimer.

The enzyme catalyses (1R,2R)-1,2-dihydrobenzene-1,2-diol + NADP(+) = catechol + NADPH + H(+). It catalyses the reaction D-xylose + NADP(+) = D-xylono-1,5-lactone + NADPH + H(+). In Xenopus laevis (African clawed frog), this protein is Trans-1,2-dihydrobenzene-1,2-diol dehydrogenase (dhdh).